The sequence spans 83 residues: Kunitz-type serine protease inhibitor 161 (83 aa).

A signal peptide spans 1-24; that stretch reads MSSGGLLLLLGLLTLWAELTPVSS. The region spanning 31-81 is the BPTI/Kunitz inhibitor domain; sequence CHLPADSGSCKGNFQAFYYHPVHRTCLEFIYGGCEGNANNFKTMDECKRTC. 3 disulfides stabilise this stretch: C31–C81, C40–C64, and C56–C77.

Belongs to the venom Kunitz-type family. As to expression, expressed by the venom gland.

The protein resides in the secreted. In terms of biological role, serine protease inhibitor. The sequence is that of Kunitz-type serine protease inhibitor 161 from Drysdalia coronoides (White-lipped snake).